The chain runs to 273 residues: Medium-wave-sensitive opsin 1 (273 aa).

Residues 1 to 5 (APRWV) lie on the Extracellular side of the membrane. The helical transmembrane segment at 6 to 30 (YHLTSAWMVFVVIASVFTNGLVLAA) threads the bilayer. The Cytoplasmic segment spans residues 31 to 42 (TMRFKKLRHPLN). Residues 43–68 (WILVNLAIADLVETIIASTISVVNQM) form a helical membrane-spanning segment. The Extracellular portion of the chain corresponds to 69–82 (YGYFVLGHPLCVVE). Residues Cys79 and Cys156 are joined by a disulfide bond. The chain crosses the membrane as a helical span at residues 83–102 (GYTASLCGITGLWSLAIISW). At 103 to 121 (ERWMVVCRPFGNVRFDAKL) the chain is on the cytoplasmic side. The helical transmembrane segment at 122–145 (AIAGIAFSWIWAAVWTAPPIFGWS) threads the bilayer. Residues 146–171 (RYWPHGLKTSCGPDVFSGSSYPGVQS) lie on the Extracellular side of the membrane. The helical transmembrane segment at 172–199 (YMIVLMITCCFIPLSVIVLCYLQVWLAI) threads the bilayer. The Cytoplasmic segment spans residues 200–221 (RAVAKQQKESESTQKAEKEVTR). The chain crosses the membrane as a helical span at residues 222–245 (MVMVMIFAFCLCWGPYAFFACFAA). Residues 246–253 (AHPGYAFH) lie on the Extracellular side of the membrane. The chain crosses the membrane as a helical span at residues 254–273 (PLVAALPAYFAKSATIYNPI). Lys265 carries the post-translational modification N6-(retinylidene)lysine.

This sequence belongs to the G-protein coupled receptor 1 family. Opsin subfamily. In terms of assembly, monomer. Homodimer. Homotetramer. In terms of processing, O-glycosylated. Post-translationally, phosphorylated on some or all of the serine and threonine residues present in the C-terminal region. In terms of tissue distribution, the three color pigments are found in the cone photoreceptor cells.

The protein resides in the membrane. In terms of biological role, visual pigments are the light-absorbing molecules that mediate vision. They consist of an apoprotein, opsin, covalently linked to cis-retinal. This chain is Medium-wave-sensitive opsin 1 (OPN1MW), found in Odocoileus virginianus virginianus (Virginia white-tailed deer).